Reading from the N-terminus, the 980-residue chain is Zinc finger BED domain-containing protein 6 (980 aa).

A required for nucleolar localization region spans residues 1–89; sequence MSVCTLSVPV…ILAKKFSKDL (89 aa). The disordered stretch occupies residues 89-109; sequence LGSGRPVADAPASLASGAPEQ. The BED-type 1 zinc finger occupies 130–187; it reads AKTSIVWHFFHVDPQYTWRAICNLCEKSVSRGKPGSHLGTSTLQRHLQARHSPHWTRA. Cys151, Cys154, His175, and His180 together coordinate Zn(2+). A disordered region spans residues 201-239; the sequence is LDLSLSPPSPGSNGSFEYIPTDSVDENRMGKKRDKSASD. The segment covering 203–215 has biased composition (low complexity); the sequence is LSLSPPSPGSNGS. The BED-type 2 zinc finger occupies 265-322; it reads AKTSAVWNFFYTDPQHISRAVCNICKRSVSRGRPGSHLGTSTLQRHLQATHPIHWAVA. Zn(2+)-binding residues include Cys286, Cys289, His310, and His315. Positions 328–397 are disordered; that stretch reads AIGNGLDETE…ADQDNPVHAQ (70 aa). Residues 360–373 show a composition bias toward acidic residues; sequence TAEDLSDSDTDEPP. Ser383 carries the phosphoserine modification. Residues 868–950 form an HATC (Hobo-Ac-Tam3) domain region; sequence VVDEYFKEKY…EQLIFLKMNL (83 aa).

Expressed in pancreatic islet cells and weakly expressed in surrounding exocrine tissues (at protein level). Expressed in muscle and brain (at protein level). Shows broad tissue distribution with expression detected in brain, stomach, intestine, heart, kidney, liver, lung, skeletal muscle, ovary, spleen, tail and testis.

It localises to the nucleus. It is found in the nucleolus. Its subcellular location is the cytoplasm. Functionally, transcriptional repressor which binds to the consensus sequence 5'-GCTCGC-3', transcription regulation may be tissue-specific. Regulates the expression of target genes such as: IGF2, PGAP6/TMEM8, ENHO, and PIANP. Acts as a transcriptional repressor of growth factor IGF2, thereby negatively regulating postnatal growth of muscles and internal organs, especially in females. Negatively regulates myoblast differentiation and myoblast mitochondrial activity via its regulation of IGF2 transcription. Negatively regulates the cell cycle of myoblasts, potentially via transcriptional regulation of the E2F family of transcription factors such as: E2F1 and E2F2. Positively regulates the cell cycle and survival of pancreatic beta cells. Binds to the CDH2 gene and may directly repress CDH2 transcription. Probably by controlling CDH2 expression, regulates pancreatic beta cell adhesion, and formation of cell-to-cell junctions between pancreatic beta cells and neural crest stem cells. May also play a role in embryonic beta cell differentiation. May play a role in insulin sensitivity and glucose clearance. The protein is Zinc finger BED domain-containing protein 6 of Mus musculus (Mouse).